The sequence spans 1331 residues: Disease resistance protein RUN1 (1331 aa).

The interval 1 to 20 (MASTSSSRASSSSSSSSTPS) is disordered. The TIR domain occupies 25-190 (ITYDVFLSFR…EITDSIFRRL (166 aa)). Residues 34–39 (RGEDTR) and Gly66 contribute to the NAD(+) site. Glu100 is an active-site residue. Residues 206-434 (SHVKEMIWRL…REPEAEILSV (229 aa)) form the NB-ARC domain. 20 LRR repeats span residues 429-452 (AEIL…IFLD), 480-509 (IKNL…GWEI), 540-565 (IKRV…AFAK), 616-638 (SYEL…NFDG), 648-673 (CSNI…SYSR), 684-708 (MPNL…VGNM), 709-732 (KKLT…IGDL), 734-756 (SLEI…GGNM), 757-779 (KSLT…IGDL), 781-803 (SLKY…GGNM), 804-826 (KSLR…IRDL), 828-850 (SLER…GGNM), 851-873 (KSLM…IGDL), 875-897 (SLKY…GGNM), 898-920 (KSLT…IGDL), 922-944 (SLVS…GGNM), 945-967 (KSLN…IGDL), 969-991 (SLMR…VGNM), 992-1014 (KSLE…IGDL), and 1017-1040 (LEKL…AIDA). The Nuclear localization signal motif lies at 1287–1291 (RKRRR).

It belongs to the disease resistance TIR-NB-LRR family.

It localises to the nucleus. It is found in the cytoplasm. The catalysed reaction is NAD(+) + H2O = ADP-D-ribose + nicotinamide + H(+). It catalyses the reaction NADP(+) + H2O = ADP-D-ribose 2'-phosphate + nicotinamide + H(+). Its function is as follows. Disease resistance (R) protein that confers resistance to multiple powdery and downy mildew by promoting cell death. Acts as a NAD(+) hydrolase (NADase): in response to activation, catalyzes cleavage of NAD(+) into ADP-D-ribose (ADPR) and nicotinamide; NAD(+) cleavage triggering a defense system that promotes cell death. Also able to hydrolyze NADP(+), but not other NAD(+)-related molecules. The chain is Disease resistance protein RUN1 from Vitis rotundifolia (Muscadine grape).